A 608-amino-acid polypeptide reads, in one-letter code: Mitochondrial import receptor subunit TOM70 (608 aa).

An N-acetylalanine modification is found at Ala2. Topologically, residues 2–38 (AASKPVEAAVVAAAVPSSGSGVGGGGTAGPGTGGLPR) are mitochondrial intermembrane. A helical membrane pass occupies residues 39–59 (WQLALAVGAPLLLGAGAIYLW). Residues 60–608 (SRQQRRREAR…KKYGLKPPTL (549 aa)) lie on the Cytoplasmic side of the membrane. The disordered stretch occupies residues 67–107 (EARGRGDASGLKRNSERKTPEGRASPAPGSGHPEGPGAHLD). Arg71 is modified (omega-N-methylarginine). 3 positions are modified to phosphoserine: Ser91, Ser96, and Ser110. TPR repeat units follow at residues 114–147 (AQAA…CPTE) and 153–186 (STFY…NPKY). Lys185 carries the post-translational modification N6-acetyllysine. Lys275 is covalently cross-linked (Glycyl lysine isopeptide (Lys-Gly) (interchain with G-Cter in SUMO2)). TPR repeat units lie at residues 294–327 (ENSG…EGKY), 329–362 (AEAL…KEAN), 367–400 (ANAL…DPQN), 401–434 (ADVY…RPES), 440–475 (QKCF…FPRC), 476–509 (AEGY…EPDN), 511–544 (TTYV…DNKC), and 545–578 (DFAY…AKSE). Ser434 carries the phosphoserine modification.

It belongs to the Tom70 family. Forms part of the preprotein translocase complex of the outer mitochondrial membrane (TOM complex) which consists of at least 7 different proteins (TOMM5, TOMM6, TOMM7, TOMM20, TOMM22, TOMM40 and TOMM70). Interacts with CAPN8. Interacts with TRADD, TRAF6 and STING. Interacts with MAVS; the interaction is enhanced by Sendai virus infection. Interacts with HSPA8 and HSP90AA1; both interactions are required for preprotein mitochondrial import. The interaction with HSP90AA1 is direct and mediates the association of TOMM70 with IRF3 and TBK1. Upon mitochondrial depolarization, interacts with PINK1; the interaction is required for PINK1-TOM-TIM23 supercomplex formation which is critical for PINK1 stabilization at the outer mitochondrial membrane, kinase activation and downstream mitophagy. As to quaternary structure, (Microbial infection) Interacts (via C-terminus) with SARS coronaviru/SARS-CoV and SARS coronavirus-2/SARS-CoV-2 virus protein ORF9b. In terms of assembly, (Microbial infection) Interacts with parasite T.gondii RH strain MAF1b1; the interaction impairs TOMM70 import activity, enables the parasite to associate with the host mitochondria and facilitates the association of MAF1b1 with MIB complex component SAMM50, promoting the formation of SPOTs (structures positive for outer mitochondrial membrane (OMM)); the interaction is probably indirect.

The protein resides in the mitochondrion outer membrane. In terms of biological role, acts as a receptor of the preprotein translocase complex of the outer mitochondrial membrane (TOM complex). Recognizes and mediates the translocation of mitochondrial preproteins from the cytosol into the mitochondria in a chaperone dependent manner. Mediates TBK1 and IRF3 activation induced by MAVS in response to Sendai virus infection and promotes host antiviral responses during virus infection. Upon Sendai virus infection, recruits HSP90AA1:IRF3:BAX in mitochondrion and the complex induces apoptosis. The chain is Mitochondrial import receptor subunit TOM70 from Homo sapiens (Human).